A 337-amino-acid chain; its full sequence is Holliday junction branch migration complex subunit RuvB (337 aa).

Positions 1–22 (MEDERITSAEVQSPDEENEELS) are disordered. Positions 1–184 (MEDERITSAE…FGIVEHMNYY (184 aa)) are large ATPase domain (RuvB-L). ATP-binding positions include Leu23, Arg24, Gly65, Lys68, Thr69, Thr70, 131-133 (EDF), Arg174, Tyr184, and Arg221. Thr69 lines the Mg(2+) pocket. The tract at residues 185–255 (NEADLANIVR…LVSQSLKLLQ (71 aa)) is small ATPAse domain (RuvB-S). Positions 258–337 (NRGLDRTDKK…LGLIDQYMNK (80 aa)) are head domain (RuvB-H). Residues Arg313 and Arg318 each contribute to the DNA site.

This sequence belongs to the RuvB family. Homohexamer. Forms an RuvA(8)-RuvB(12)-Holliday junction (HJ) complex. HJ DNA is sandwiched between 2 RuvA tetramers; dsDNA enters through RuvA and exits via RuvB. An RuvB hexamer assembles on each DNA strand where it exits the tetramer. Each RuvB hexamer is contacted by two RuvA subunits (via domain III) on 2 adjacent RuvB subunits; this complex drives branch migration. In the full resolvosome a probable DNA-RuvA(4)-RuvB(12)-RuvC(2) complex forms which resolves the HJ.

Its subcellular location is the cytoplasm. The enzyme catalyses ATP + H2O = ADP + phosphate + H(+). Its function is as follows. The RuvA-RuvB-RuvC complex processes Holliday junction (HJ) DNA during genetic recombination and DNA repair, while the RuvA-RuvB complex plays an important role in the rescue of blocked DNA replication forks via replication fork reversal (RFR). RuvA specifically binds to HJ cruciform DNA, conferring on it an open structure. The RuvB hexamer acts as an ATP-dependent pump, pulling dsDNA into and through the RuvAB complex. RuvB forms 2 homohexamers on either side of HJ DNA bound by 1 or 2 RuvA tetramers; 4 subunits per hexamer contact DNA at a time. Coordinated motions by a converter formed by DNA-disengaged RuvB subunits stimulates ATP hydrolysis and nucleotide exchange. Immobilization of the converter enables RuvB to convert the ATP-contained energy into a lever motion, pulling 2 nucleotides of DNA out of the RuvA tetramer per ATP hydrolyzed, thus driving DNA branch migration. The RuvB motors rotate together with the DNA substrate, which together with the progressing nucleotide cycle form the mechanistic basis for DNA recombination by continuous HJ branch migration. Branch migration allows RuvC to scan DNA until it finds its consensus sequence, where it cleaves and resolves cruciform DNA. The protein is Holliday junction branch migration complex subunit RuvB of Pediococcus pentosaceus (strain ATCC 25745 / CCUG 21536 / LMG 10740 / 183-1w).